We begin with the raw amino-acid sequence, 500 residues long: Cytochrome P450 2D14 (500 aa).

A heme-binding site is contributed by C446.

This sequence belongs to the cytochrome P450 family. Heme is required as a cofactor.

It is found in the endoplasmic reticulum membrane. It localises to the microsome membrane. The catalysed reaction is an organic molecule + reduced [NADPH--hemoprotein reductase] + O2 = an alcohol + oxidized [NADPH--hemoprotein reductase] + H2O + H(+). Its function is as follows. Cytochromes P450 are a group of heme-thiolate monooxygenases. In liver microsomes, this enzyme is involved in an NADPH-dependent electron transport pathway. It oxidizes a variety of structurally unrelated compounds, including steroids, fatty acids, and xenobiotics. In Bos taurus (Bovine), this protein is Cytochrome P450 2D14 (CYP2D14).